The chain runs to 414 residues: UPF0754 membrane protein tlr2287 (414 aa).

2 helical membrane-spanning segments follow: residues 2–22 (ADIS…IGYF) and 386–406 (AIVR…AGVL).

The protein belongs to the UPF0754 family.

Its subcellular location is the cell inner membrane. This is UPF0754 membrane protein tlr2287 from Thermosynechococcus vestitus (strain NIES-2133 / IAM M-273 / BP-1).